The following is a 538-amino-acid chain: MSKFQNYYNNDDNVINYPYIDYIIKSYIPEYYVDTNRRKYVDMHIFEEAMLHVSTIYEESDKTYERLEYLGDAIFHMIITEYFYHRYNEENEGFLTRLRIRIERGDSMVELSKNLGLNNFVQIYGISLNDHILEDIFESFIGAFYLNFGMKYTRLFIIKLIEKHKNLSELIAYDDNYKDLLLRYFHQMKWGHPKYIEEIVIDPKNNQRNKFISKVKNPFDKVIGIGSASTKKKSEQLASQMALTNLGVIIDGEIDTDWINKIEKIETEATQTEIKDKKPMSVFNPNNKLLSKNTIKNLLLQYNTKLPTIDIDLKLFYEAMTHRSYLIRKNLPNRDVPKSKSIVRLQKKSNERLQFLGDAVIHFIIGEYLFNKYADSGEGYLTRLRCKLENSESLFFLAKQSDISSYLLISQNIEVLHGRENVNIIGGGLEAFVGALYLNIGLGTVKQFLLEIMRIELDINQIAENETNYKDLILQLYNKNKWGHPVYKILKEEGPDHCKIFTMGLYLGNKLMGIGKASSKKKAEQIASKKMYQNYINN.

RNase III domains follow at residues 24–149 (IKSY…LNFG) and 238–381 (ASQM…EGYL). In terms of domain architecture, DRBM spans 408 to 477 (LISQNIEVLH…NYKDLILQLY (70 aa)).

It belongs to the ribonuclease III family.

It carries out the reaction Endonucleolytic cleavage to 5'-phosphomonoester.. Digests double-stranded RNA. This is Probable ribonuclease 3 from Acanthamoeba polyphaga (Amoeba).